A 783-amino-acid chain; its full sequence is uncharacterized protein (783 aa).

Residues 40-66 (CFNCKARKVRCDGANPCKACASNNLEC) constitute a DNA-binding region (zn(2)-C6 fungal-type).

Its subcellular location is the cytoplasm. It localises to the nucleus. This is an uncharacterized protein from Schizosaccharomyces pombe (strain 972 / ATCC 24843) (Fission yeast).